The chain runs to 90 residues: Acylphosphatase (90 aa).

Positions 5 to 90 (SFVVHVWGQV…PPQKGGFHTN (86 aa)) constitute an Acylphosphatase-like domain. Residues Arg-20 and Asn-38 contribute to the active site.

The protein belongs to the acylphosphatase family.

It catalyses the reaction an acyl phosphate + H2O = a carboxylate + phosphate + H(+). The protein is Acylphosphatase (acyP) of Aeromonas salmonicida (strain A449).